The sequence spans 157 residues: V-type proton ATPase 16 kDa proteolipid subunit c (157 aa).

The Lumenal segment spans residues 1 to 10 (MALPEENPVY). A helical membrane pass occupies residues 11-33 (GPFFGVMGAAAAIIFSALGAAYG). At 34–55 (TAKSGTGIAAMSVMRPELIMKS) the chain is on the cytoplasmic side. The helical transmembrane segment at 56–76 (IIPVVMAGIIAIYGLVVAVLI) threads the bilayer. Residues 77–94 (AGSLDTPTKYSLYKGFIH) are Lumenal-facing. The chain crosses the membrane as a helical span at residues 95 to 116 (LGAGLAVGFSGLAAGFAIGIVG). Over 117–128 (DAGVRGTAQQPR) the chain is Cytoplasmic. The helical transmembrane segment at 129-154 (LFVGMILILIFAEVLGLYGLIVAIYL) threads the bilayer. Topologically, residues 155–157 (YTK) are lumenal.

It belongs to the V-ATPase proteolipid subunit family. In terms of assembly, V-ATPase is a heteromultimeric enzyme made up of two complexes: the ATP-hydrolytic V1 complex and the proton translocation V0 complex. The V1 complex consists of three catalytic AB heterodimers that form a heterohexamer, three peripheral stalks each consisting of EG heterodimers, one central rotor including subunits D and F, and the regulatory subunits C and H. The proton translocation complex V0 consists of the proton transport subunit a, a ring of proteolipid subunits c9c'', rotary subunit d, subunits e and f, and the accessory subunits VhaAC45 and ATP6AP2.

Its subcellular location is the membrane. In terms of biological role, proton-conducting pore forming subunit of the V0 complex of vacuolar(H+)-ATPase (V-ATPase), a multisubunit enzyme composed of a peripheral complex (V1) that hydrolyzes ATP and a membrane integral complex (V0) that translocates protons. V-ATPase is responsible for acidifying and maintaining the pH of intracellular compartments and in some cell types, is targeted to the plasma membrane, where it is responsible for acidifying the extracellular environment. The sequence is that of V-type proton ATPase 16 kDa proteolipid subunit c from Aedes aegypti (Yellowfever mosquito).